The primary structure comprises 614 residues: Threonine--tRNA ligase (614 aa).

The segment at 1–141 is editing domain; it reads MRLLLIHSDY…LSKTIVPGEE (141 aa). The tract at residues 198–490 is catalytic; sequence AHVDLMRSKE…ISTQKVPALP (293 aa). Zn(2+)-binding residues include C290, H342, and H463.

It belongs to the class-II aminoacyl-tRNA synthetase family. As to quaternary structure, homodimer. It depends on Zn(2+) as a cofactor.

It localises to the cytoplasm. The enzyme catalyses tRNA(Thr) + L-threonine + ATP = L-threonyl-tRNA(Thr) + AMP + diphosphate + H(+). In terms of biological role, catalyzes the attachment of threonine to tRNA(Thr) in a two-step reaction: L-threonine is first activated by ATP to form Thr-AMP and then transferred to the acceptor end of tRNA(Thr). Also edits incorrectly charged L-seryl-tRNA(Thr). The polypeptide is Threonine--tRNA ligase (Methanoregula boonei (strain DSM 21154 / JCM 14090 / 6A8)).